Reading from the N-terminus, the 200-residue chain is Late embryogenesis abundant protein 19 (200 aa).

Disordered regions lie at residues 1–145 (MASH…KTGS) and 172–200 (TEDE…ARDH). Composition is skewed to basic and acidic residues over residues 13–23 (GETKAHTEEKA), 30–42 (SKDK…DRAS), 53–81 (QDTK…KDKT), 88–97 (ARDKAAESKD), and 105–114 (EKTEQAKQKA). Residues 52–81 (GQDTKEATKEKAQAAKERASETAQAAKDKT) adopt a coiled-coil conformation. Low complexity-rich tracts occupy residues 115 to 130 (AETA…ETAQ) and 186 to 200 (TSAT…ARDH).

The protein belongs to the LEA type 4 family.

Involved in response to stress. In Oryza sativa subsp. japonica (Rice), this protein is Late embryogenesis abundant protein 19.